We begin with the raw amino-acid sequence, 468 residues long: Glucose-dependent insulinotropic receptor (468 aa).

Over Met1 to Ser6 the chain is Extracellular. A helical transmembrane segment spans residues Phe7–Val27. The Cytoplasmic portion of the chain corresponds to Ala28–Asp37. Residues Gly38 to Ile58 traverse the membrane as a helical segment. The Extracellular segment spans residues Ser59–Arg81. Residues Met82 to Asp102 traverse the membrane as a helical segment. Residues Arg103–Cys125 are Cytoplasmic-facing. Residues Ile126–Phe146 traverse the membrane as a helical segment. Topologically, residues Gln147–Arg164 are extracellular. Residues Phe165–Tyr185 form a helical membrane-spanning segment. Residues Cys186–Thr226 lie on the Cytoplasmic side of the membrane. A helical membrane pass occupies residues Val227–Val247. Residues Gln248 to Lys262 lie on the Extracellular side of the membrane. Residues Tyr263–Gln283 form a helical membrane-spanning segment. The Cytoplasmic segment spans residues Arg284 to Gly468.

The protein belongs to the G-protein coupled receptor 1 family. Expression restricted to the beta-cells of pancreatic islets.

The protein localises to the cell membrane. In terms of biological role, receptor for the endogenous fatty-acid ethanolamide oleoylethanolamide (OEA) and lysophosphatidylcholine (LPC). Functions as a glucose-dependent insulinotropic receptor. The activity of this receptor is mediated by G proteins which activate adenylate cyclase. Seems to act through a G(s) mediated pathway. The sequence is that of Glucose-dependent insulinotropic receptor (Gpr119) from Rattus norvegicus (Rat).